The following is a 314-amino-acid chain: Putative peptide transport system permease protein BruAb2_1031 (314 aa).

Transmembrane regions (helical) follow at residues 12–32 (AIPV…LLPG), 101–121 (LALL…VVAA), 135–155 (LALL…VILF), 177–197 (WLRS…GYLA), 237–257 (VSVL…SVVI), and 286–306 (MLFL…LYTI). The 210-residue stretch at 95–304 (LPVTISLALL…AINVLVDILY (210 aa)) folds into the ABC transmembrane type-1 domain.

The protein belongs to the binding-protein-dependent transport system permease family. The complex is composed of two ATP-binding proteins (BruAb2_1033 and BruAb2_1034), two transmembrane proteins (BruAb2_1031 and BruAb2_1032) and a solute-binding protein (BruAb2_1030).

It is found in the cell inner membrane. In terms of biological role, probably part of an ABC transporter complex that could be involved in peptide import. Probably responsible for the translocation of the substrate across the membrane. In Brucella abortus biovar 1 (strain 9-941), this protein is Putative peptide transport system permease protein BruAb2_1031.